Reading from the N-terminus, the 358-residue chain is Chorismate synthase (358 aa).

An NADP(+)-binding site is contributed by arginine 46. Residues 123 to 125, 235 to 236, glycine 275, 290 to 294, and arginine 316 each bind FMN; these read RSS, NA, and KPTPS.

The protein belongs to the chorismate synthase family. In terms of assembly, homotetramer. The cofactor is FMNH2.

It carries out the reaction 5-O-(1-carboxyvinyl)-3-phosphoshikimate = chorismate + phosphate. It participates in metabolic intermediate biosynthesis; chorismate biosynthesis; chorismate from D-erythrose 4-phosphate and phosphoenolpyruvate: step 7/7. In terms of biological role, catalyzes the anti-1,4-elimination of the C-3 phosphate and the C-6 proR hydrogen from 5-enolpyruvylshikimate-3-phosphate (EPSP) to yield chorismate, which is the branch point compound that serves as the starting substrate for the three terminal pathways of aromatic amino acid biosynthesis. This reaction introduces a second double bond into the aromatic ring system. In Sulfurimonas denitrificans (strain ATCC 33889 / DSM 1251) (Thiomicrospira denitrificans (strain ATCC 33889 / DSM 1251)), this protein is Chorismate synthase.